The following is a 156-amino-acid chain: Lipoprotein signal peptidase (156 aa).

2 consecutive transmembrane segments (helical) span residues 57-77 and 83-103; these read LFLI…LFIN and ILKI…IDRI. Residues Asp-110 and Asp-129 contribute to the active site. A helical membrane pass occupies residues 124-144; the sequence is IFNIADVLVSLGTILLIIFII.

It belongs to the peptidase A8 family.

It is found in the cell membrane. It catalyses the reaction Release of signal peptides from bacterial membrane prolipoproteins. Hydrolyzes -Xaa-Yaa-Zaa-|-(S,diacylglyceryl)Cys-, in which Xaa is hydrophobic (preferably Leu), and Yaa (Ala or Ser) and Zaa (Gly or Ala) have small, neutral side chains.. The protein operates within protein modification; lipoprotein biosynthesis (signal peptide cleavage). This protein specifically catalyzes the removal of signal peptides from prolipoproteins. This Clostridium tetani (strain Massachusetts / E88) protein is Lipoprotein signal peptidase.